Reading from the N-terminus, the 551-residue chain is Calnexin (551 aa).

An N-terminal signal peptide occupies residues 1–23; that stretch reads MRPQNVAGVAGTGALIMAAGALA. Over 24-477 the chain is Lumenal; sequence DQTVFHPTSL…QAIKQMPEVA (454 aa). A disordered region spans residues 293–315; that stretch reads EEEPETIPDPEAEKPEEWDDEED. Residues 478-498 form a helical membrane-spanning segment; that stretch reads AGLAAAVFTLLGMLLALFGFI. Residues 499–551 lie on the Cytoplasmic side of the membrane; the sequence is GSAPTKVKQTTVKTKAVAPVAPAGEEEKKALDQAGVEIPAEGSKKRVTRSTKE. The interval 526-551 is disordered; it reads KKALDQAGVEIPAEGSKKRVTRSTKE.

This sequence belongs to the calreticulin family.

The protein resides in the endoplasmic reticulum membrane. In terms of biological role, endoplasmic reticulum (ER) chaperone that functions to stabilize non-native glycoproteins and retain them in the ER until they are properly folded or targeted for ER associated degradation (ERAD). With co-chaperone DNJ1, coordinately maintains ER homeostasis and contributes to maintenance of cell wall architecture. This chain is Calnexin, found in Cryptococcus neoformans var. grubii serotype A (strain H99 / ATCC 208821 / CBS 10515 / FGSC 9487) (Filobasidiella neoformans var. grubii).